The primary structure comprises 479 residues: Ribosomal RNA small subunit methyltransferase F (479 aa).

Residues 125-131 (AAAPGSK), Glu-149, Asp-176, and Asp-194 contribute to the S-adenosyl-L-methionine site. Cys-247 serves as the catalytic Nucleophile.

It belongs to the class I-like SAM-binding methyltransferase superfamily. RsmB/NOP family.

The protein resides in the cytoplasm. It carries out the reaction cytidine(1407) in 16S rRNA + S-adenosyl-L-methionine = 5-methylcytidine(1407) in 16S rRNA + S-adenosyl-L-homocysteine + H(+). Its function is as follows. Specifically methylates the cytosine at position 1407 (m5C1407) of 16S rRNA. The protein is Ribosomal RNA small subunit methyltransferase F of Shigella dysenteriae serotype 1 (strain Sd197).